A 486-amino-acid chain; its full sequence is ATP-dependent rRNA helicase RRP3 (486 aa).

Residues 1–11 (MSKVTKQSKSH) are compositionally biased toward basic residues. The segment at 1 to 52 (MSKVTKQSKSHKSSELVSLAEKIKQKALENRKQSREESQATEEANTASETEA) is disordered. Positions 17-49 (VSLAEKIKQKALENRKQSREESQATEEANTASE) form a coiled coil. A compositionally biased stretch (basic and acidic residues) spans 21–38 (EKIKQKALENRKQSREES). A compositionally biased stretch (low complexity) spans 41-52 (TEEANTASETEA). The short motif at 66-94 (SSFRELDLVPELIEACDNLNFTKPTPIQS) is the Q motif element. Residues 97-269 (IPPALQGKDI…RASLTNPVKC (173 aa)) form the Helicase ATP-binding domain. 110-117 (AQTGSGKT) contacts ATP. Residues 216–219 (DEAD) carry the DEAD box motif. The Helicase C-terminal domain occupies 300 to 446 (LLNEFIGKTT…SIVLSLRDSV (147 aa)). Positions 459–486 (RRNKEKQTRGKGRRSRTATRENMDKEEE) are disordered. Basic and acidic residues predominate over residues 476–486 (ATRENMDKEEE).

The protein belongs to the DEAD box helicase family. DDX47/RRP3 subfamily. In terms of assembly, interacts with the SSU processome.

The protein resides in the nucleus. The enzyme catalyses ATP + H2O = ADP + phosphate + H(+). Functionally, ATP-dependent rRNA helicase required for pre-ribosomal RNA processing. Involved in the maturation of the 35S-pre-rRNA and to its cleavage to mature 18S rRNA. The polypeptide is ATP-dependent rRNA helicase RRP3 (Eremothecium gossypii (strain ATCC 10895 / CBS 109.51 / FGSC 9923 / NRRL Y-1056) (Yeast)).